A 169-amino-acid chain; its full sequence is Ribosome maturation factor RimM (169 aa).

Positions 95–169 (EDGYYWTDLI…QITVDWELGY (75 aa)) constitute a PRC barrel domain.

It belongs to the RimM family. As to quaternary structure, binds ribosomal protein uS19.

Its subcellular location is the cytoplasm. In terms of biological role, an accessory protein needed during the final step in the assembly of 30S ribosomal subunit, possibly for assembly of the head region. Essential for efficient processing of 16S rRNA. May be needed both before and after RbfA during the maturation of 16S rRNA. It has affinity for free ribosomal 30S subunits but not for 70S ribosomes. The sequence is that of Ribosome maturation factor RimM from Nitrosomonas europaea (strain ATCC 19718 / CIP 103999 / KCTC 2705 / NBRC 14298).